Consider the following 506-residue polypeptide: MGIGLIILYLLIGLLAYDFTKKNKKISKNDPKQPLAIPVLGHLHLFGSQPHRSLTELAKKFGGIFTLWMGDERSMVITDPNILRELYVKNHLNFYNRASSESIRIYSGNLVDISFSVGESWKNRRRYVSAALTKTKVLNVITLIEEQANFLINSMQYYAKSGEPFFPHKYYNKYTMNIVMSIGFSKTISENESVEEGPISQLIIPFYNILENLGSGNLGDYVWYTQPFFYFKNKKLEQDTKKVYTFLEEIYNEHIKNLDESNPRDLMDQLIISTGGKEKDMVIHVSTDFLLAGSDTNASTLEWFCIFLANNPEIQKKAYEELISVVGKDCKAVTTKYRDDCPYLVGAIKETLRMRTPAPLSLIRVSEEDFMTSGGIFIPKGTQIVPNLYGIGQNFVDDPSSYKPERWVEYYKNKTPTREMEATTETKSNITTEILPNDLDKVVLPFSIGPRNCPGNIISEINLFLACSNILLNFEFSNGGKKIDETEVFGITIHPKDFSIQLKKRE.

The helical transmembrane segment at 1–21 (MGIGLIILYLLIGLLAYDFTK) threads the bilayer. Cysteine 453 provides a ligand contact to heme.

It belongs to the cytochrome P450 family. It depends on heme as a cofactor.

The protein resides in the membrane. In Dictyostelium discoideum (Social amoeba), this protein is Probable cytochrome P450 519E1 (cyp519E1).